A 977-amino-acid chain; its full sequence is Leucine--tRNA ligase (977 aa).

The 'HIGH' region signature appears at Pro-11–His-21. Residues Val-220–Gln-318 form an insert region. The short motif at Lys-699–Ser-703 is the 'KMSKS' region element. Lys-702 lines the ATP pocket.

It belongs to the class-I aminoacyl-tRNA synthetase family.

It is found in the cytoplasm. It carries out the reaction tRNA(Leu) + L-leucine + ATP = L-leucyl-tRNA(Leu) + AMP + diphosphate. This is Leucine--tRNA ligase (leuS) from Nanoarchaeum equitans (strain Kin4-M).